Here is a 214-residue protein sequence, read N- to C-terminus: RNA-free ribonuclease P (214 aa).

This sequence belongs to the HARP family.

It catalyses the reaction Endonucleolytic cleavage of RNA, removing 5'-extranucleotides from tRNA precursor.. RNA-free RNase P that catalyzes the removal of the 5'-leader sequence from pre-tRNA to produce the mature 5'-terminus. This Aeropyrum pernix (strain ATCC 700893 / DSM 11879 / JCM 9820 / NBRC 100138 / K1) protein is RNA-free ribonuclease P.